The sequence spans 196 residues: MEISQAEWVRDTFIDHRYAQGYFLMGAGDRLEWYTSRQRALIPLDERFRYPASLRRVLNQNRFQVAINRDFSAVVEGCADRPMTWITPRLKEVYHLLYATGWAVSFETWQGDELAGGILGIVIGGAFIGESMFYRIPNGSKVAMVKLVEHLRQRGFLLFDAQLQNPHLERFGAYVVSPRKYRQLLAQAIRKPCQFL.

The protein belongs to the L/F-transferase family.

It localises to the cytoplasm. The enzyme catalyses N-terminal L-lysyl-[protein] + L-leucyl-tRNA(Leu) = N-terminal L-leucyl-L-lysyl-[protein] + tRNA(Leu) + H(+). The catalysed reaction is N-terminal L-arginyl-[protein] + L-leucyl-tRNA(Leu) = N-terminal L-leucyl-L-arginyl-[protein] + tRNA(Leu) + H(+). It carries out the reaction L-phenylalanyl-tRNA(Phe) + an N-terminal L-alpha-aminoacyl-[protein] = an N-terminal L-phenylalanyl-L-alpha-aminoacyl-[protein] + tRNA(Phe). In terms of biological role, functions in the N-end rule pathway of protein degradation where it conjugates Leu, Phe and, less efficiently, Met from aminoacyl-tRNAs to the N-termini of proteins containing an N-terminal arginine or lysine. The sequence is that of Leucyl/phenylalanyl-tRNA--protein transferase from Thermosynechococcus vestitus (strain NIES-2133 / IAM M-273 / BP-1).